The chain runs to 200 residues: Holliday junction branch migration complex subunit RuvA (200 aa).

The domain I stretch occupies residues 1 to 64; sequence MIGQLTGLVG…EDAIQLFGFA (64 aa). Residues 65–143 are domain II; sequence TTDERDWFRL…KMPGGGGTVS (79 aa). The tract at residues 144–148 is flexible linker; the sequence is APGIV. Positions 149-200 are domain III; the sequence is SGPSVENDALLALAGLGFRRAEAWPVLSKVLAENENATLDLAIRLSLKDLAR.

It belongs to the RuvA family. As to quaternary structure, homotetramer. Forms an RuvA(8)-RuvB(12)-Holliday junction (HJ) complex. HJ DNA is sandwiched between 2 RuvA tetramers; dsDNA enters through RuvA and exits via RuvB. An RuvB hexamer assembles on each DNA strand where it exits the tetramer. Each RuvB hexamer is contacted by two RuvA subunits (via domain III) on 2 adjacent RuvB subunits; this complex drives branch migration. In the full resolvosome a probable DNA-RuvA(4)-RuvB(12)-RuvC(2) complex forms which resolves the HJ.

It localises to the cytoplasm. Functionally, the RuvA-RuvB-RuvC complex processes Holliday junction (HJ) DNA during genetic recombination and DNA repair, while the RuvA-RuvB complex plays an important role in the rescue of blocked DNA replication forks via replication fork reversal (RFR). RuvA specifically binds to HJ cruciform DNA, conferring on it an open structure. The RuvB hexamer acts as an ATP-dependent pump, pulling dsDNA into and through the RuvAB complex. HJ branch migration allows RuvC to scan DNA until it finds its consensus sequence, where it cleaves and resolves the cruciform DNA. The sequence is that of Holliday junction branch migration complex subunit RuvA from Gluconobacter oxydans (strain 621H) (Gluconobacter suboxydans).